The sequence spans 197 residues: Protein SPMIP2 (197 aa).

Residues 161–197 (SKAALPIGSRPPKLPKLPKKEEKSKFRPLHQHDARCY) are disordered. The span at 178 to 197 (PKKEEKSKFRPLHQHDARCY) shows a compositional bias: basic and acidic residues.

This Bos taurus (Bovine) protein is Protein SPMIP2 (SPMIP2).